Here is a 718-residue protein sequence, read N- to C-terminus: DNA ligase (718 aa).

Residues 44 to 48 (DADYD), 93 to 94 (SL), and Glu127 each bind NAD(+). The N6-AMP-lysine intermediate role is filled by Lys129. Arg150, Glu186, Lys302, and Lys326 together coordinate NAD(+). 4 residues coordinate Zn(2+): Cys432, Cys435, Cys456, and Cys462. The 79-residue stretch at 640–718 (TAGSPVAGKT…EDEWLALISG (79 aa)) folds into the BRCT domain.

It belongs to the NAD-dependent DNA ligase family. LigA subfamily. Requires Mg(2+) as cofactor. Mn(2+) is required as a cofactor.

The catalysed reaction is NAD(+) + (deoxyribonucleotide)n-3'-hydroxyl + 5'-phospho-(deoxyribonucleotide)m = (deoxyribonucleotide)n+m + AMP + beta-nicotinamide D-nucleotide.. Functionally, DNA ligase that catalyzes the formation of phosphodiester linkages between 5'-phosphoryl and 3'-hydroxyl groups in double-stranded DNA using NAD as a coenzyme and as the energy source for the reaction. It is essential for DNA replication and repair of damaged DNA. The sequence is that of DNA ligase from Rhizobium etli (strain CIAT 652).